Consider the following 735-residue polypeptide: Photosystem I P700 chlorophyll a apoprotein A2 (735 aa).

8 helical membrane passes run 46 to 69 (LFST…FHIA), 135 to 158 (LYQG…LHLQ), 175 to 199 (LNHH…HVAI), 273 to 291 (IAHH…GHMY), 333 to 356 (LHFQ…QHMY), 372 to 398 (AALY…IFFI), 420 to 442 (AIIS…LYVH), and 518 to 536 (FLVH…LILV). Positions 560 and 569 each coordinate [4Fe-4S] cluster. 2 helical membrane-spanning segments follow: residues 576 to 597 (AFYL…YWHW) and 644 to 666 (LAVW…MFLI). 3 residues coordinate chlorophyll a: histidine 655, methionine 663, and tyrosine 671. Residue tryptophan 672 coordinates phylloquinone. The helical transmembrane segment at 708 to 728 (VVGLAHFSVGYVLTYAAFLIA) threads the bilayer.

The protein belongs to the PsaA/PsaB family. The PsaA/B heterodimer binds the P700 chlorophyll special pair and subsequent electron acceptors. PSI consists of a core antenna complex that captures photons, and an electron transfer chain that converts photonic excitation into a charge separation. The cyanobacterial PSI reaction center is composed of one copy each of PsaA,B,C,D,E,F,I,J,K,L,M and X, and forms trimeric complexes. The cofactor is PSI electron transfer chain: 5 chlorophyll a, 1 chlorophyll a', 2 phylloquinones and 3 4Fe-4S clusters. PSI core antenna: 90 chlorophyll a, 22 carotenoids, 3 phospholipids and 1 galactolipid. P700 is a chlorophyll a/chlorophyll a' dimer, A0 is one or more chlorophyll a, A1 is one or both phylloquinones and FX is a shared 4Fe-4S iron-sulfur center..

Its subcellular location is the cellular thylakoid membrane. It carries out the reaction reduced [plastocyanin] + hnu + oxidized [2Fe-2S]-[ferredoxin] = oxidized [plastocyanin] + reduced [2Fe-2S]-[ferredoxin]. Functionally, psaA and PsaB bind P700, the primary electron donor of photosystem I (PSI), as well as the electron acceptors A0, A1 and FX. PSI is a plastocyanin/cytochrome c6-ferredoxin oxidoreductase, converting photonic excitation into a charge separation, which transfers an electron from the donor P700 chlorophyll pair to the spectroscopically characterized acceptors A0, A1, FX, FA and FB in turn. Oxidized P700 is reduced on the lumenal side of the thylakoid membrane by plastocyanin or cytochrome c6. This chain is Photosystem I P700 chlorophyll a apoprotein A2, found in Synechococcus sp. (strain CC9902).